Here is a 515-residue protein sequence, read N- to C-terminus: Probable NADPH:adrenodoxin oxidoreductase, mitochondrial (515 aa).

FAD is bound by residues alanine 52, glutamate 73, leucine 81, and isoleucine 119. NADP(+)-binding positions include 191-194 (QGNV), 236-237 (RR), and glutamate 248. Residues tryptophan 419 and 426-428 (GSI) contribute to the FAD site. Glycine 426 contacts NADP(+).

This sequence belongs to the ferredoxin--NADP reductase type 1 family. The cofactor is FAD.

The protein resides in the mitochondrion inner membrane. The catalysed reaction is 2 reduced [adrenodoxin] + NADP(+) + H(+) = 2 oxidized [adrenodoxin] + NADPH. The sequence is that of Probable NADPH:adrenodoxin oxidoreductase, mitochondrial (fdxr) from Dictyostelium discoideum (Social amoeba).